A 259-amino-acid chain; its full sequence is Peroxisomal membrane protein 11B (259 aa).

Residue Lys-43 is modified to N6-acetyllysine. The segment at 157–176 is disordered; sequence LKGSGGGVPGGSETGGLGGP. The segment covering 159–176 has biased composition (gly residues); that stretch reads GSGGGVPGGSETGGLGGP. Residues 211–259 form an interaction with PEX19, PEX11G and FIS1 and peroxisome targeting region; that stretch reads VVRNACDLFIPLDKLGLWRCGPGIVGLCGLVSSILSILTLIYPWLRLKP. A helical transmembrane segment spans residues 233-255; it reads GIVGLCGLVSSILSILTLIYPWL.

The protein belongs to the peroxin-11 family. In terms of assembly, homodimer. Heterodimer with PEX11G. Interacts with PEX19. Interacts with FIS1.

The protein resides in the peroxisome membrane. Involved in peroxisomal proliferation. May regulate peroxisome division by recruiting the dynamin-related GTPase DNM1L to the peroxisomal membrane. Promotes membrane protrusion and elongation on the peroxisomal surface. This chain is Peroxisomal membrane protein 11B (PEX11B), found in Homo sapiens (Human).